The chain runs to 60 residues: Protein CADMIUM TOLERANCE 4 (60 aa).

A helical transmembrane segment spans residues 26–42; that stretch reads GFLYACLFMLCCCFCCY.

It belongs to the CYSTM1 family. In terms of tissue distribution, mainly expressed in shoots, and, to a lower extent, in roots.

It is found in the cell membrane. The protein resides in the secreted. It localises to the cell wall. Its function is as follows. Confers resistance to heavy metal ions (e.g. aluminium (Al)) by chelating them at the plasma membrane of root cells, thus stopping their entry and reducing their accumulation. This is Protein CADMIUM TOLERANCE 4 from Oryza sativa subsp. japonica (Rice).